Reading from the N-terminus, the 417-residue chain is Secernin-3 (417 aa).

Positions 1–5 (MYPRS) are excised as a propeptide. Cys6 is a catalytic residue. Glyoxylic acid (Cys); alternate is present on Cys6. The residue at position 6 (Cys6) is a Pyruvic acid (Cys); alternate.

The protein belongs to the peptidase C69 family. Secernin subfamily.

Functionally, plays a role in thermal nociception. The protein is Secernin-3 (scrn3) of Danio rerio (Zebrafish).